A 158-amino-acid polypeptide reads, in one-letter code: Phosphopantetheine adenylyltransferase (158 aa).

Substrate is bound at residue S8. ATP is bound by residues 8-9 (SF) and H16. Residues K40, T72, and R86 each contribute to the substrate site. Residues 87-89 (GLR), E97, and 122-128 (HSFLSSS) each bind ATP.

The protein belongs to the bacterial CoaD family. As to quaternary structure, homohexamer. Mg(2+) is required as a cofactor.

It localises to the cytoplasm. The enzyme catalyses (R)-4'-phosphopantetheine + ATP + H(+) = 3'-dephospho-CoA + diphosphate. The protein operates within cofactor biosynthesis; coenzyme A biosynthesis; CoA from (R)-pantothenate: step 4/5. Its function is as follows. Reversibly transfers an adenylyl group from ATP to 4'-phosphopantetheine, yielding dephospho-CoA (dPCoA) and pyrophosphate. This is Phosphopantetheine adenylyltransferase from Prochlorococcus marinus (strain NATL2A).